Consider the following 537-residue polypeptide: CTP synthase (537 aa).

The interval 1–265 (MVHFIFVTGG…DNKVLKFFNI (265 aa)) is amidoligase domain. S13 contacts CTP. S13 is a UTP binding site. Residues 14-19 (SLGKGL) and D71 each bind ATP. Mg(2+) contacts are provided by D71 and E139. Residues 146-148 (DIE) and K222 contribute to the CTP site. K222 provides a ligand contact to UTP. The region spanning 290-536 (RIAIIAKYHK…IKAAIEYNKC (247 aa)) is the Glutamine amidotransferase type-1 domain. G352 provides a ligand contact to L-glutamine. C379 (nucleophile; for glutamine hydrolysis) is an active-site residue. Residues 380–383 (FGMQ), E403, and R464 contribute to the L-glutamine site. Residues H509 and E511 contribute to the active site.

Belongs to the CTP synthase family. In terms of assembly, homotetramer.

It carries out the reaction UTP + L-glutamine + ATP + H2O = CTP + L-glutamate + ADP + phosphate + 2 H(+). The enzyme catalyses L-glutamine + H2O = L-glutamate + NH4(+). It catalyses the reaction UTP + NH4(+) + ATP = CTP + ADP + phosphate + 2 H(+). Its pathway is pyrimidine metabolism; CTP biosynthesis via de novo pathway; CTP from UDP: step 2/2. Its activity is regulated as follows. Allosterically activated by GTP, when glutamine is the substrate; GTP has no effect on the reaction when ammonia is the substrate. The allosteric effector GTP functions by stabilizing the protein conformation that binds the tetrahedral intermediate(s) formed during glutamine hydrolysis. Inhibited by the product CTP, via allosteric rather than competitive inhibition. Catalyzes the ATP-dependent amination of UTP to CTP with either L-glutamine or ammonia as the source of nitrogen. Regulates intracellular CTP levels through interactions with the four ribonucleotide triphosphates. The protein is CTP synthase of Rickettsia conorii (strain ATCC VR-613 / Malish 7).